The chain runs to 207 residues: Cytochrome c biogenesis ATP-binding export protein CcmA (207 aa).

One can recognise an ABC transporter domain in the interval 3 to 206 (LMAEGLSARR…AKSLEMTGFV (204 aa)). Residue 35-42 (GPNGAGKS) participates in ATP binding.

This sequence belongs to the ABC transporter superfamily. CcmA exporter (TC 3.A.1.107) family. In terms of assembly, the complex is composed of two ATP-binding proteins (CcmA) and two transmembrane proteins (CcmB).

The protein localises to the cell inner membrane. It catalyses the reaction heme b(in) + ATP + H2O = heme b(out) + ADP + phosphate + H(+). In terms of biological role, part of the ABC transporter complex CcmAB involved in the biogenesis of c-type cytochromes; once thought to export heme, this seems not to be the case, but its exact role is uncertain. Responsible for energy coupling to the transport system. The protein is Cytochrome c biogenesis ATP-binding export protein CcmA of Rhizobium meliloti (strain 1021) (Ensifer meliloti).